The sequence spans 697 residues: Colicin-D (697 aa).

The TonB box motif lies at 17–24; that stretch reads HSMVVWPS.

It belongs to the cloacin colicin family.

Its function is as follows. Colicins are polypeptide toxins produced by and active against E.coli and closely related bacteria. Colicin D inhibits protein synthesis. The protein is Colicin-D (cda) of Escherichia coli.